The chain runs to 115 residues: Large ribosomal subunit protein bL19 (115 aa).

The protein belongs to the bacterial ribosomal protein bL19 family.

In terms of biological role, this protein is located at the 30S-50S ribosomal subunit interface and may play a role in the structure and function of the aminoacyl-tRNA binding site. The protein is Large ribosomal subunit protein bL19 of Hydrogenovibrio crunogenus (strain DSM 25203 / XCL-2) (Thiomicrospira crunogena).